We begin with the raw amino-acid sequence, 356 residues long: Glutamine synthetase root isozyme 3 (356 aa).

Residues 19–99 (IIAEYIWIGG…VMCDCYTPAG (81 aa)) enclose the GS beta-grasp domain. The GS catalytic domain occupies 106-356 (KRYNAAKIFS…IAETTIIWKP (251 aa)).

This sequence belongs to the glutamine synthetase family. As to quaternary structure, homooctamer. In terms of tissue distribution, found in all the tissues examined with higher expression found in tissues of the root.

The protein resides in the cytoplasm. It catalyses the reaction L-glutamate + NH4(+) + ATP = L-glutamine + ADP + phosphate + H(+). Functionally, plays a role in the flow of nitrogen into nitrogenous organic compounds. This chain is Glutamine synthetase root isozyme 3 (GLN4), found in Zea mays (Maize).